Reading from the N-terminus, the 323-residue chain is Beta-ketoacyl-[acyl-carrier-protein] synthase III (323 aa).

Active-site residues include C113 and H250. An ACP-binding region spans residues 251–255; it reads QANKR. N280 is an active-site residue.

This sequence belongs to the thiolase-like superfamily. FabH family. In terms of assembly, homodimer.

It is found in the cytoplasm. The catalysed reaction is malonyl-[ACP] + acetyl-CoA + H(+) = 3-oxobutanoyl-[ACP] + CO2 + CoA. It functions in the pathway lipid metabolism; fatty acid biosynthesis. Catalyzes the condensation reaction of fatty acid synthesis by the addition to an acyl acceptor of two carbons from malonyl-ACP. Catalyzes the first condensation reaction which initiates fatty acid synthesis and may therefore play a role in governing the total rate of fatty acid production. Possesses both acetoacetyl-ACP synthase and acetyl transacylase activities. Its substrate specificity determines the biosynthesis of branched-chain and/or straight-chain of fatty acids. The chain is Beta-ketoacyl-[acyl-carrier-protein] synthase III from Brucella suis (strain ATCC 23445 / NCTC 10510).